A 69-amino-acid polypeptide reads, in one-letter code: DNA gyrase inhibitor YacG (69 aa).

The Zn(2+) site is built by Cys-7, Cys-10, Cys-26, and Cys-30.

The protein belongs to the DNA gyrase inhibitor YacG family. Interacts with GyrB. Zn(2+) is required as a cofactor.

In terms of biological role, inhibits all the catalytic activities of DNA gyrase by preventing its interaction with DNA. Acts by binding directly to the C-terminal domain of GyrB, which probably disrupts DNA binding by the gyrase. In Shewanella sp. (strain W3-18-1), this protein is DNA gyrase inhibitor YacG.